We begin with the raw amino-acid sequence, 472 residues long: Homeobox protein PKNOX2 (472 aa).

The disordered stretch occupies residues 1–62 (MMQHASPAPA…STPVPSAPID (62 aa)). Residues 26-38 (DSPQMTATAQPPS) show a composition bias toward polar residues. The segment covering 46 to 56 (SAPSAAASTPV) has biased composition (low complexity). An MEIS N-terminal domain is found at 96-179 (GSECITSASF…MHSDNLLRND (84 aa)). Positions 291–350 (KRGVLPKHATNIMRSWLFQHLMHPYPTEDEKRQIAAQTNLTLLQVNNWFINARRRILQPM) form a DNA-binding region, homeobox. Disordered regions lie at residues 351–371 (LDAS…QHRP), 386–405 (QQQG…LDNL), and 422–472 (MAAH…DSLE). Basic residues predominate over residues 361–371 (KAKKIKSQHRP). The span at 429-454 (LDGTEEEDEDEMEEEEEEELEEEVDE) shows a compositional bias: acidic residues.

Belongs to the TALE/MEIS homeobox family.

Its subcellular location is the nucleus. This Homo sapiens (Human) protein is Homeobox protein PKNOX2 (PKNOX2).